Consider the following 1025-residue polypeptide: Multidrug resistance protein MdtC (1025 aa).

The next 12 helical transmembrane spans lie at 15–35 (ILIS…LPVA), 333–353 (EVEQ…FLFL), 360–380 (LIPA…MYLC), 387–407 (LSLM…IVVL), 431–451 (VGFT…PLLL), 469–489 (VAIG…CGWL), 528–548 (LTGL…ISIP), 851–871 (AQVI…GVLY), 875–895 (VHPL…LLAL), 897–917 (IFDA…IGIV), 953–973 (PIMM…LSGG), and 984–1004 (ITIV…TPVV).

Belongs to the resistance-nodulation-cell division (RND) (TC 2.A.6) family. MdtC subfamily. In terms of assembly, part of a tripartite efflux system composed of MdtA, MdtB and MdtC. MdtC forms a heteromultimer with MdtB.

Its subcellular location is the cell inner membrane. This chain is Multidrug resistance protein MdtC, found in Klebsiella pneumoniae subsp. pneumoniae (strain ATCC 700721 / MGH 78578).